Reading from the N-terminus, the 309-residue chain is Homoserine O-succinyltransferase (309 aa).

C142 functions as the Acyl-thioester intermediate in the catalytic mechanism. Residues K163 and S192 each coordinate substrate. H235 (proton acceptor) is an active-site residue. The active site involves E237. Substrate is bound at residue R249.

Belongs to the MetA family. As to quaternary structure, homodimer.

It localises to the cytoplasm. The catalysed reaction is L-homoserine + succinyl-CoA = O-succinyl-L-homoserine + CoA. It participates in amino-acid biosynthesis; L-methionine biosynthesis via de novo pathway; O-succinyl-L-homoserine from L-homoserine: step 1/1. In terms of biological role, transfers a succinyl group from succinyl-CoA to L-homoserine, forming succinyl-L-homoserine. In Escherichia fergusonii (strain ATCC 35469 / DSM 13698 / CCUG 18766 / IAM 14443 / JCM 21226 / LMG 7866 / NBRC 102419 / NCTC 12128 / CDC 0568-73), this protein is Homoserine O-succinyltransferase.